A 133-amino-acid polypeptide reads, in one-letter code: Small ribosomal subunit protein uS8 (133 aa).

Belongs to the universal ribosomal protein uS8 family. In terms of assembly, part of the 30S ribosomal subunit. Contacts proteins S5 and S12.

Functionally, one of the primary rRNA binding proteins, it binds directly to 16S rRNA central domain where it helps coordinate assembly of the platform of the 30S subunit. This is Small ribosomal subunit protein uS8 from Protochlamydia amoebophila (strain UWE25).